Here is a 513-residue protein sequence, read N- to C-terminus: Probable hydrolase YhcX (513 aa).

Residues Met-14 to Val-212 form the N-acetyltransferase domain. Positions Val-229–Leu-484 constitute a CN hydrolase domain. Catalysis depends on Glu-270, which acts as the Proton acceptor. Lys-345 (proton donor) is an active-site residue. Cys-379 serves as the catalytic Nucleophile.

This sequence belongs to the carbon-nitrogen hydrolase superfamily. NIT1/NIT2 family.

This Bacillus subtilis (strain 168) protein is Probable hydrolase YhcX (yhcX).